The following is a 924-amino-acid chain: Probable dipeptidyl-aminopeptidase B (924 aa).

Positions 1 to 12 (MPSTYSDDNTLR) are enriched in polar residues. The tract at residues 1 to 102 (MPSTYSDDNT…RSNQRSSADG (102 aa)) is disordered. The Cytoplasmic segment spans residues 1 to 111 (MPSTYSDDNT…GQRMDRSLRR (111 aa)). A compositionally biased stretch (basic and acidic residues) spans 14-23 (GLDRFRDHSP). A compositionally biased stretch (polar residues) spans 31 to 43 (SQETDSTVSTTSI). Over residues 47-58 (RIQERLDTKEFP) the composition is skewed to basic and acidic residues. Over residues 87 to 100 (NASPSSRSNQRSSA) the composition is skewed to low complexity. Residues 112–132 (WLFIVSGALVATWVIGLIFFV) traverse the membrane as a helical; Signal-anchor for type II membrane protein segment. Topologically, residues 133-924 (SSKAYKPSSS…GMKRRALPTA (792 aa)) are vacuolar. N-linked (GlcNAc...) asparagine glycans are attached at residues Asn231 and Asn364. The active-site Charge relay system is Ser768. Asn827 carries an N-linked (GlcNAc...) asparagine glycan. Catalysis depends on charge relay system residues Asp845 and His878.

The protein belongs to the peptidase S9B family.

The protein resides in the vacuole membrane. The catalysed reaction is Release of an N-terminal dipeptide, Xaa-Yaa-|-Zaa-, from a polypeptide, preferentially when Yaa is Pro, provided Zaa is neither Pro nor hydroxyproline.. Type IV dipeptidyl-peptidase which removes N-terminal dipeptides sequentially from polypeptides having unsubstituted N-termini provided that the penultimate residue is proline. This is Probable dipeptidyl-aminopeptidase B (dapB) from Neurospora crassa (strain ATCC 24698 / 74-OR23-1A / CBS 708.71 / DSM 1257 / FGSC 987).